The following is a 186-amino-acid chain: Ran guanine nucleotide release factor (186 aa).

The interaction with RAN stretch occupies residues 27–70; sequence DLRPVPDNQEVFCHPVTDQSLIVELLELQAHVRGEAAARYHFED.

This sequence belongs to the MOG1 family. Monomer. Interacts with RAN, both RAN-GTP and RAN-GDP. Competes with RCC1 for a common binding site on RAN and thereby inhibits RCC1-mediated nucleotide exchange. Forms a complex with RAN-GTP and RANBP1. Interacts with the cytoplasmic loop 2 of SCN5A. In terms of tissue distribution, isoform 1 and isoform 2 are ubiquitously expressed. Detected in heart and brain.

It localises to the nucleus. The protein resides in the cytoplasm. Its subcellular location is the perinuclear region. It is found in the cell membrane. In terms of biological role, may regulate the intracellular trafficking of RAN. Promotes guanine nucleotide release from RAN and inhibits binding of new GTP by preventing the binding of the RAN guanine nucleotide exchange factor RCC1. Regulates the levels of GTP-bound RAN in the nucleus, and thereby plays a role in the regulation of RAN-dependent mitotic spindle dynamics. Enhances the expression of SCN5A at the cell membrane in cardiomyocytes. In Homo sapiens (Human), this protein is Ran guanine nucleotide release factor (RANGRF).